Reading from the N-terminus, the 103-residue chain is Methane monooxygenase component D (103 aa).

As to quaternary structure, the soluble methane monooxygenase (sMMO) consists of four components A/MMOH (composed of alpha/MmoX, beta/MmoY and gamma/MmoZ), B/MMOB (MmoB), C/MMOR (MmoC) and D/MMOD (MmoD).

In Methylococcus capsulatus (strain ATCC 33009 / NCIMB 11132 / Bath), this protein is Methane monooxygenase component D (mmoD).